A 269-amino-acid polypeptide reads, in one-letter code: C-type lectin domain family 1 member A (269 aa).

The Cytoplasmic portion of the chain corresponds to 1-51 (MQAKYSSTRDMLDDDDTTISLYSGTSTVTRRAEPRHSENGTPSSVWRPVAL). A helical; Signal-anchor for type II membrane protein transmembrane segment spans residues 52-72 (TLLTLCLVLLVGLAALGLVFF). The Extracellular portion of the chain corresponds to 73 to 269 (QFYQLSNIQQ…AGRVVPGELQ (197 aa)). N-linked (GlcNAc...) asparagine glycans are attached at residues N94, N126, N168, and N202. Positions 143–257 (YGDKCYQFYK…CKELRRCACE (115 aa)) constitute a C-type lectin domain. Cystine bridges form between C164–C256 and C235–C248.

The protein localises to the membrane. This chain is C-type lectin domain family 1 member A (Clec1a), found in Mus musculus (Mouse).